The following is a 279-amino-acid chain: MTTAAPTPSLFGQCLAEFLGTALLIFFGTGCVAALKVAGASFGLWEISIIWGVGVSMAIYLSAGVSGAHLNPAVSIALWLFAGFEGRKLPFYITAQVAGAFCAAALVYTLYSSLFIEFEQAQNIVRGSQDSLALASVFSTYPHPALSVGQAFLVEVVITAILMAVIMALTDDGNGLPRGPLAPLLIGLLIAVIGSAMGPLTGFAMNPARDFGPKLMTYLAGWGPIAFTGGREIPYFLVPIFAPILGACLGAGGYRVLIARHLPSAAAPAEAEPEKVRAS.

Residues 1 to 8 lie on the Cytoplasmic side of the membrane; it reads MTTAAPTP. A helical transmembrane segment spans residues 9–37; it reads SLFGQCLAEFLGTALLIFFGTGCVAALKV. Topologically, residues 38 to 42 are periplasmic; the sequence is AGASF. A helical transmembrane segment spans residues 43 to 63; it reads GLWEISIIWGVGVSMAIYLSA. The Cytoplasmic portion of the chain corresponds to 64 to 66; sequence GVS. An intramembrane segment occupies 67–70; sequence GAHL. Residues 71 to 73 carry the NPA 1 motif; the sequence is NPA. The segment at residues 71-81 is an intramembrane region (helical); that stretch reads NPAVSIALWLF. At 82 to 87 the chain is on the cytoplasmic side; the sequence is AGFEGR. A helical membrane pass occupies residues 88–111; sequence KLPFYITAQVAGAFCAAALVYTLY. Topologically, residues 112–146 are periplasmic; the sequence is SSLFIEFEQAQNIVRGSQDSLALASVFSTYPHPAL. A helical membrane pass occupies residues 147-172; that stretch reads SVGQAFLVEVVITAILMAVIMALTDD. The Cytoplasmic segment spans residues 173 to 180; the sequence is GNGLPRGP. Residues 181 to 197 traverse the membrane as a helical segment; sequence LAPLLIGLLIAVIGSAM. Residues 198 to 201 lie on the Periplasmic side of the membrane; the sequence is GPLT. The stretch at 202–205 is an intramembrane region; that stretch reads GFAM. An NPA 2 motif is present at residues 206–208; it reads NPA. The helical intramembrane region spans 206-219; the sequence is NPARDFGPKLMTYL. Topologically, residues 220–234 are periplasmic; sequence AGWGPIAFTGGREIP. The chain crosses the membrane as a helical span at residues 235–257; sequence YFLVPIFAPILGACLGAGGYRVL. The Cytoplasmic portion of the chain corresponds to 258-279; that stretch reads IARHLPSAAAPAEAEPEKVRAS.

It belongs to the MIP/aquaporin (TC 1.A.8) family.

Its subcellular location is the cell inner membrane. The enzyme catalyses glycerol(in) = glycerol(out). Functionally, mediates glycerol diffusion across the cytoplasmic membrane via a pore-type mechanism. The polypeptide is Glycerol uptake facilitator protein (glpF) (Pseudomonas aeruginosa (strain ATCC 15692 / DSM 22644 / CIP 104116 / JCM 14847 / LMG 12228 / 1C / PRS 101 / PAO1)).